The sequence spans 257 residues: Dihydroorotate dehydrogenase B (NAD(+)), electron transfer subunit (257 aa).

The FAD-binding FR-type domain maps to 2–100 (ILIEDLTVVS…MGPQGNGFDI (99 aa)). FAD-binding positions include 51 to 54 (RPIS), 68 to 70 (VYR), and 75 to 76 (GT). The [2Fe-2S] cluster site is built by Cys-220, Cys-225, Cys-228, and Cys-244.

This sequence belongs to the PyrK family. In terms of assembly, heterotetramer of 2 PyrK and 2 PyrD type B subunits. The cofactor is [2Fe-2S] cluster. Requires FAD as cofactor.

It participates in pyrimidine metabolism; UMP biosynthesis via de novo pathway; orotate from (S)-dihydroorotate (NAD(+) route): step 1/1. In terms of biological role, responsible for channeling the electrons from the oxidation of dihydroorotate from the FMN redox center in the PyrD type B subunit to the ultimate electron acceptor NAD(+). The protein is Dihydroorotate dehydrogenase B (NAD(+)), electron transfer subunit of Streptococcus thermophilus (strain ATCC BAA-491 / LMD-9).